Consider the following 213-residue polypeptide: Pyrrolidone-carboxylate peptidase (213 aa).

Catalysis depends on residues glutamate 78, cysteine 141, and histidine 165.

This sequence belongs to the peptidase C15 family. In terms of assembly, homotetramer.

It localises to the cytoplasm. It catalyses the reaction Release of an N-terminal pyroglutamyl group from a polypeptide, the second amino acid generally not being Pro.. In terms of biological role, removes 5-oxoproline from various penultimate amino acid residues except L-proline. In Staphylococcus carnosus (strain TM300), this protein is Pyrrolidone-carboxylate peptidase.